A 233-amino-acid polypeptide reads, in one-letter code: MSSQFIFEDVPQRNAATFNPEVGYVAFIGKYGQQLNFGVARVFFLNQKKAKMVLHKTAQPSVDLTFGGVKFTVVNNHFPQYVSNPVPDNAITLHRMSGYLARWIADTCKASVLKLAEASAQIVMPLAEVKGCTWADGYTMYLGFAPGAEMFLDAFDFYPLVIEMHRVLKDNMDVNFMKKVLRQRYGTMTAEEWMTQKITEIKAAFNSVGQLAWAKSGFSPAARTFLQQFGINI.

RNA is bound by residues glutamine 12, alanine 15, alanine 16, lysine 48, lysine 51, histidine 77, arginine 95, arginine 166, lysine 178, lysine 179, arginine 182, and arginine 184.

Belongs to the orthobunyavirus nucleocapsid protein family. As to quaternary structure, homotetramer. Binds the viral genomic RNA.

Its subcellular location is the virion. Encapsidates the genome, protecting it from nucleases. The encapsidated genomic RNA is termed the nucleocapsid (NC) and serves as template for transcription and replication. The NC have a helical organization. This chain is Nucleoprotein (N), found in Bos taurus (Bovine).